A 713-amino-acid polypeptide reads, in one-letter code: Acetyl-coenzyme A synthetase 1 (713 aa).

The segment at 1 to 39 (MSPSAVQSSKLEEQSSEIDKLKAKMSQSAATAQQKKEHE) is disordered. Over residues 10–22 (KLEEQSSEIDKLK) the composition is skewed to basic and acidic residues. CoA-binding positions include 248 to 251 (RGGK) and Thr367. ATP-binding positions include 443–445 (GEP), 467–472 (DTYWQT), Asp559, and Arg574. The FACS motif lies at 552–600 (PGYYFTGDGAAKDKDGYIWILGRVDDVVNVSGHRLSTAEIEAAIIEDPI). Ser582 lines the CoA pocket. Position 585 (Arg585) interacts with ATP. Position 650 (Arg650) interacts with CoA. The short motif at 711-713 (VKL) is the Microbody targeting signal element.

The protein belongs to the ATP-dependent AMP-binding enzyme family.

The protein localises to the microsome. The protein resides in the cytoplasm. It localises to the mitochondrion. It is found in the nucleus. The catalysed reaction is acetate + ATP + CoA = acetyl-CoA + AMP + diphosphate. Catalyzes the production of acetyl-CoA. Provides the acetyl-CoA source for histone acetylation in the nucleus. 'Aerobic' isozyme of acetyl-coenzyme A synthetase, which supports growth on nonfermentable carbon sources such as glycerol and ethanol. May be required for assimilation of ethanol and acetate. This Saccharomyces cerevisiae (strain ATCC 204508 / S288c) (Baker's yeast) protein is Acetyl-coenzyme A synthetase 1 (ACS1).